Consider the following 366-residue polypeptide: Ferredoxin--NADP reductase, leaf isozyme 2, chloroplastic (366 aa).

The transit peptide at 1 to 48 (MAAVNTVSSLPCSKAGAAVAGGAPRPSTCSVFYPPRCWSKRSSGNGVR) directs the protein to the chloroplast. The FAD-binding FR-type domain occupies 87 to 209 (KEPYTGRCLL…TGPVGKEMLM (123 aa)). FAD contacts are provided by residues 145-148 (RLYS), 166-168 (CVK), Tyr-172, and 183-185 (VCS). Residues Ser-148 and Lys-168 each coordinate NADP(+). An intrachain disulfide couples Cys-184 to Cys-189. Ser-185 is modified (phosphoserine). Thr-216 is modified (phosphothreonine). Thr-224 is an FAD binding site. NADP(+)-binding positions include Thr-224, 256–257 (VP), 286–287 (SR), Lys-296, 325–326 (GL), and Glu-364.

It belongs to the ferredoxin--NADP reductase type 1 family. In terms of assembly, heterodimer with LFNR1. Component of high molecular weight thylakoid LFNRs-containing protein complexes containing LIR1, LFNR1, LFNR2, TIC62 and TROL proteins. Interacts directly with LIR1 and TIC62; LIR1 increases the affinity of LFNR1 and LFNR2 for TIC62. The cofactor is FAD. In terms of processing, may form interchain disulfide bonds with LIR1.

The protein resides in the plastid. The protein localises to the chloroplast stroma. Its subcellular location is the chloroplast thylakoid membrane. It catalyses the reaction 2 reduced [2Fe-2S]-[ferredoxin] + NADP(+) + H(+) = 2 oxidized [2Fe-2S]-[ferredoxin] + NADPH. The protein operates within energy metabolism; photosynthesis. Plays a key role in regulating the relative amounts of cyclic and non-cyclic electron flow to meet the demands of the plant for ATP and reducing power. This is Ferredoxin--NADP reductase, leaf isozyme 2, chloroplastic from Oryza sativa subsp. japonica (Rice).